We begin with the raw amino-acid sequence, 556 residues long: CDP-diacylglycerol--glycerol-3-phosphate 3-phosphatidyltransferase, mitochondrial (556 aa).

A mitochondrion-targeting transit peptide spans 1 to 28 (MAAAAAAAAGPVFWRRLLGLLPGRPGLA). Residue Ser-49 is modified to Phosphoserine. 124-131 (ASLYLGIG) is a binding site for ATP. 2 PLD phosphodiesterase domains span residues 215–241 (TIGLQHIKVYLFDNNVILSGANLSDSY) and 419–457 (FGAKGVAGAIPAAYVHIERQFYSEVCSLGQQERVQLQEY). Active-site residues include His-220, Lys-222, and Asp-227.

Belongs to the CDP-alcohol phosphatidyltransferase class-II family.

It is found in the mitochondrion. It catalyses the reaction a CDP-1,2-diacyl-sn-glycerol + sn-glycerol 3-phosphate = a 1,2-diacyl-sn-glycero-3-phospho-(1'-sn-glycero-3'-phosphate) + CMP + H(+). Its pathway is phospholipid metabolism; phosphatidylglycerol biosynthesis; phosphatidylglycerol from CDP-diacylglycerol: step 1/2. Its activity is regulated as follows. Activated by calcium and magnesium and inhibited by other bivalent cations. Functions in the biosynthesis of the anionic phospholipids phosphatidylglycerol and cardiolipin. The protein is CDP-diacylglycerol--glycerol-3-phosphate 3-phosphatidyltransferase, mitochondrial (PGS1) of Bos taurus (Bovine).